The following is a 341-amino-acid chain: Hyaluronidase A (341 aa).

N-linked (GlcNAc...) asparagine glycans are attached at residues asparagine 3, asparagine 68, and asparagine 83. Intrachain disulfides connect cysteine 23–cysteine 311 and cysteine 189–cysteine 201.

This sequence belongs to the glycosyl hydrolase 56 family. In terms of tissue distribution, expressed by the venom gland.

It is found in the secreted. The catalysed reaction is Random hydrolysis of (1-&gt;4)-linkages between N-acetyl-beta-D-glucosamine and D-glucuronate residues in hyaluronate.. May hydrolyze high molecular weight hyaluronic acid to produce small oligosaccharides. This is Hyaluronidase A from Vespa velutina (Asian yellow-legged hornet).